A 156-amino-acid polypeptide reads, in one-letter code: Xanthocillin biosynthesis cluster protein D (156 aa).

N-linked (GlcNAc...) asparagine glycosylation is found at Asn-107 and Asn-120. Residues 131–153 (IHLNAIALVATVWYGFTLSSSLL) form a helical membrane-spanning segment.

Its subcellular location is the membrane. It participates in secondary metabolite biosynthesis. Part of the gene cluster that mediates the biosynthesis of the isocyanide xanthocillin and its derivatives. The first step of the pathway consists in the conversion of tyrosine into a vinyl-isonitrile intermediate by the isocyanide synthase xanB. Subsequent oxidative dimerization of this intermediate to form xanthocillin may involve the cytochrome P450 monooxygenase xanG, whose expression is coregulated with that of XanB. Xanthocillin can be further modified by the isonitrile hydratase-like protein xanA which introduces N-formyl groups and the methyltransferase xanE which introduces methyl groups, leading to the production of several derivatives including fumiformamide. Finally, fumiformamide can be subject to both oxidative and reductive cyclization to yield melanocins E and F, respectively. The chain is Xanthocillin biosynthesis cluster protein D from Aspergillus fumigatus (strain ATCC MYA-4609 / CBS 101355 / FGSC A1100 / Af293) (Neosartorya fumigata).